The following is a 330-amino-acid chain: Alpha-1,6-glucosyltransferase (330 aa).

Belongs to the glycosyltransferase group 1 family. Requires Does not require a metal cofactor. as cofactor.

Its subcellular location is the cytoplasm. It functions in the pathway protein modification; protein glycosylation. In terms of biological role, catalyzes the transfer of a glucose moiety from UDP-glucose to another glucose that is N-linked to an asparagine within a peptide or protein. Can act in a repetitive manner, and this way it elongates the N-linked glucose by a glycan chain consisting of several alpha-1-&gt;6 linked glucose residues. Is able to add up to six glucose units in vitro. Cannot use UDP-Gal, UDP-GlcNAc or UDP-GalNAc as a substrate donor. The protein is Alpha-1,6-glucosyltransferase of Actinobacillus pleuropneumoniae serotype 7 (strain AP76).